The following is a 348-amino-acid chain: NADH-ubiquinone oxidoreductase chain 2 (348 aa).

9 helical membrane passes run 3 to 23 (PYVL…TFAS), 60 to 80 (FLTQ…NAWM), 96 to 116 (TMFM…FWMP), 149 to 169 (IDPL…GWGG), 178 to 197 (ILAY…IQYA), 202 to 219 (LLAL…FLTL), 246 to 266 (LVLL…KWLI), 274 to 294 (DLPI…YFYL), and 326 to 346 (LALF…ILTL).

The protein belongs to the complex I subunit 2 family.

It localises to the mitochondrion inner membrane. The enzyme catalyses a ubiquinone + NADH + 5 H(+)(in) = a ubiquinol + NAD(+) + 4 H(+)(out). Functionally, core subunit of the mitochondrial membrane respiratory chain NADH dehydrogenase (Complex I) that is believed to belong to the minimal assembly required for catalysis. Complex I functions in the transfer of electrons from NADH to the respiratory chain. The immediate electron acceptor for the enzyme is believed to be ubiquinone. The polypeptide is NADH-ubiquinone oxidoreductase chain 2 (MT-ND2) (Carassius auratus (Goldfish)).